Reading from the N-terminus, the 99-residue chain is Putative transmembrane protein ORF13 (99 aa).

The next 3 membrane-spanning stretches (helical) occupy residues 8–28 (IATFGIGDTVTTIIGLSMAGI), 42–62 (LGLFGIIAAKVLYFGLMYIIV), and 73–93 (GPITITVLGTLICLWNIAIIA).

It is found in the host membrane. In His1 virus (isolate Australia/Victoria) (His1V), this protein is Putative transmembrane protein ORF13.